The primary structure comprises 64 residues: Lantipeptide Flvbeta.d (64 aa).

Residues 1–31 (MDNNTEKFNELAAIADESELNEMLDENITGA) constitute a propeptide, cleaved by FlvT. Residues 33-37 (STIQC) constitute a cross-link (lanthionine (Ser-Cys); by FlvM2). 2 positions are modified to 2,3-didehydrobutyrine; by FlvM2: threonine 34 and threonine 41. 3 consecutive cross-links (beta-methyllanthionine (Thr-Cys); by FlvM2) follow at residues 44–52 (TILSVVFDC), 55–58 (TSAC), and 59–62 (TPPC). Residues 47-53 (SVVFDCC) constitute a cross-link (lanthionine (Ser-Cys); by FlvM2).

In terms of processing, contains LL-lanthionine, DL-lanthionine, and DL-beta-methyllanthionine, when coepressed in E.coli with the flavecin synthetase FlvM2.

It is found in the secreted. Its function is as follows. Lanthionine-containing peptide that does probably not show antibacterial activity, since its analog [+2]Flvbeta.d does not show antibacterial activity against M.luteus. Also does not show antibiotic activity when tested with [Del2]Flvalpha.a, an analog of Flvalpha.a, which is encoded by the same operon than Flvbeta.d. The bactericidal activity of lantibiotics is based on depolarization of energized bacterial cytoplasmic membranes, initiated by the formation of aqueous transmembrane pores. This Ruminococcus flavefaciens protein is Lantipeptide Flvbeta.d.